The chain runs to 138 residues: Small ribosomal subunit protein bS6 (138 aa).

The disordered stretch occupies residues 94–138; that stretch reads VKQDGPLPTPKPTSKENEPEKEEVKPTEEKTESPSKDEKKEDSKE. Basic and acidic residues predominate over residues 106-138; it reads TSKENEPEKEEVKPTEEKTESPSKDEKKEDSKE.

The protein belongs to the bacterial ribosomal protein bS6 family.

In terms of biological role, binds together with bS18 to 16S ribosomal RNA. The chain is Small ribosomal subunit protein bS6 from Prochlorococcus marinus (strain NATL2A).